Reading from the N-terminus, the 124-residue chain is MSETQDMIRDVQDYPSRLNDPKSKRFETFSYLPQMSAEEIRKQIEYIVSKGWNPAIEHCEPENAILHYWYMWKLPMFGETDVDKIIAEIEACKRSNPNHLIKLIGYDNIRQTQGTAMLVYRPAQ.

Belongs to the RuBisCO small chain family. In terms of assembly, heterohexadecamer of 8 large and 8 small subunits.

Its function is as follows. RuBisCO catalyzes two reactions: the carboxylation of D-ribulose 1,5-bisphosphate, the primary event in carbon dioxide fixation, as well as the oxidative fragmentation of the pentose substrate. Both reactions occur simultaneously and in competition at the same active site. Although the small subunit is not catalytic it is essential for maximal activity. This chain is Ribulose bisphosphate carboxylase small subunit, found in Hydrogenophilus thermoluteolus (Pseudomonas hydrogenothermophila).